The primary structure comprises 342 residues: Anthranilate phosphoribosyltransferase (342 aa).

5-phospho-alpha-D-ribose 1-diphosphate contacts are provided by residues Gly-83, 86-87, Thr-91, 93-96, 111-119, and Ser-123; these read GD, NIST, and KHGGRSVSS. An anthranilate-binding site is contributed by Gly-83. Ser-95 lines the Mg(2+) pocket. Residue Arg-169 participates in anthranilate binding. Mg(2+) is bound by residues Asp-228 and Glu-229.

Belongs to the anthranilate phosphoribosyltransferase family. Homodimer. It depends on Mg(2+) as a cofactor.

It carries out the reaction N-(5-phospho-beta-D-ribosyl)anthranilate + diphosphate = 5-phospho-alpha-D-ribose 1-diphosphate + anthranilate. Its pathway is amino-acid biosynthesis; L-tryptophan biosynthesis; L-tryptophan from chorismate: step 2/5. Catalyzes the transfer of the phosphoribosyl group of 5-phosphorylribose-1-pyrophosphate (PRPP) to anthranilate to yield N-(5'-phosphoribosyl)-anthranilate (PRA). The polypeptide is Anthranilate phosphoribosyltransferase (Chromobacterium violaceum (strain ATCC 12472 / DSM 30191 / JCM 1249 / CCUG 213 / NBRC 12614 / NCIMB 9131 / NCTC 9757 / MK)).